The primary structure comprises 289 residues: Probable aquaporin PIP2-6 (289 aa).

N-acetylmethionine is present on Met-1. Topologically, residues 1–38 are cytoplasmic; that stretch reads MTKDELTEEESLSGKDYLDPPPVKTFEVRELKKWSFYR. Thr-7 is modified (phosphothreonine). Residue Ser-11 is modified to Phosphoserine. Residues 39–59 traverse the membrane as a helical segment; that stretch reads AVIAEFIATLLFLYVTVLTVI. Residues 60-80 lie on the Extracellular side of the membrane; sequence GFKSQTDINAGGGACASVGLL. A helical transmembrane segment spans residues 81 to 101; that stretch reads GISWAFGGMIFILVYCTAGIS. Topologically, residues 102–124 are cytoplasmic; that stretch reads GGHINPAVTFGLFLASKVSLVRA. An NPA 1 motif is present at residues 106–108; it reads NPA. The helical transmembrane segment at 125–145 threads the bilayer; that stretch reads VSYMVAQCLGATCGVGLVKVF. At 146–165 the chain is on the extracellular side; sequence QSTYYNRYGGGANMLSDGYN. A helical membrane pass occupies residues 166-186; it reads VGVGVGAEIIGTFVLVYTVFS. The Cytoplasmic portion of the chain corresponds to 187-200; sequence ATDPKRNARDSHIP. The chain crosses the membrane as a helical span at residues 201–221; sequence VLAPLPIGFSVFMVHLATIPI. Residues 222-248 lie on the Extracellular side of the membrane; the sequence is TGTGINPARSFGAAVIYNNQKAWDDQW. Positions 227 to 229 match the NPA 2 motif; it reads NPA. Residues 249-269 traverse the membrane as a helical segment; the sequence is IFWVGPFVGAAIAAFYHQFVL. At 270-289 the chain is on the cytoplasmic side; the sequence is RAGAMKAYGSVRSQLHELHA. Residues Ser-279 and Ser-282 each carry the phosphoserine modification.

This sequence belongs to the MIP/aquaporin (TC 1.A.8) family. PIP (TC 1.A.8.11) subfamily. In terms of tissue distribution, expressed above ground, and in flower buds.

The protein localises to the cell membrane. Functionally, aquaporins facilitate the transport of water and small neutral solutes across cell membranes. The chain is Probable aquaporin PIP2-6 (PIP2-6) from Arabidopsis thaliana (Mouse-ear cress).